Consider the following 83-residue polypeptide: Protein Vpu (83 aa).

At 1–4 the chain is on the extracellular side; that stretch reads MLSL. Residues 5–25 traverse the membrane as a helical segment; it reads GFIALGAAVSIAVIVWALLYR. Over 26–83 the chain is Cytoplasmic; the sequence is EYKKIKLQEKIKHIRQRIREREEDSGNESDGDAEWLDGDEEWLVTLLSSSKLDQGNWV. 2 positions are modified to phosphoserine; by host CK2: serine 50 and serine 54.

It belongs to the HIV-1 VPU protein family. Homopentamer. Interacts with host CD4 and BRTC; these interactions induce proteasomal degradation of CD4. Interacts with host BST2; this interaction leads to the degradation of host BST2. Interacts with host FBXW11. Interacts with host AP1M1; this interaction plays a role in the mistrafficking and subsequent degradation of host BST2. Interacts with host RANBP2; this interaction allows Vpu to down-regulate host BLM sumoylation. Post-translationally, phosphorylated by host CK2. This phosphorylation is necessary for interaction with human BTRC and degradation of CD4.

Its subcellular location is the host membrane. With respect to regulation, ion channel activity is inhibited by hexamethylene amiloride in vitro. Functionally, enhances virion budding by targeting host CD4 and Tetherin/BST2 to proteasome degradation. Degradation of CD4 prevents any unwanted premature interactions between viral Env and its host receptor CD4 in the endoplasmic reticulum. Degradation of antiretroviral protein Tetherin/BST2 is important for virion budding, as BST2 tethers new viral particles to the host cell membrane. Mechanistically, Vpu bridges either CD4 or BST2 to BTRC, a substrate recognition subunit of the Skp1/Cullin/F-box protein E3 ubiquitin ligase, induces their ubiquitination and subsequent proteasomal degradation. The alteration of the E3 ligase specificity by Vpu seems to promote the degradation of host IKBKB, leading to NF-kappa-B down-regulation and subsequent apoptosis. Acts as a viroporin that forms an oligomeric ion channel in membranes. Modulates the host DNA repair mechanisms to promote degradation of nuclear viral cDNA in cells that are already productively infected in order to suppress immune sensing and proviral hyper-integration (superinfection). Manipulates PML-NBs and modulates SUMOylation of host BLM protein thereby enhancing its DNA-end processing activity toward viral unintegrated linear DNA. Also inhibits RAD52-mediated homologous repair of viral cDNA, preventing the generation of dead-end circular forms of single copies of the long terminal repeat and permitting sustained nucleolytic attack. The polypeptide is Protein Vpu (Human immunodeficiency virus type 1 group N (isolate YBF30) (HIV-1)).